Consider the following 140-residue polypeptide: UPF0225 protein SAV_6631 (140 aa).

The tract at residues 1 to 22 (MSKSRRTRSTSRPTSRPQPASC) is disordered. Residues 10 to 19 (TSRPTSRPQP) are compositionally biased toward low complexity.

This sequence belongs to the UPF0225 family.

This is UPF0225 protein SAV_6631 from Streptomyces avermitilis (strain ATCC 31267 / DSM 46492 / JCM 5070 / NBRC 14893 / NCIMB 12804 / NRRL 8165 / MA-4680).